The chain runs to 145 residues: uncharacterized protein (145 aa).

Residues 104–124 (IEVIILSHHFVIGFSFLLGLL) traverse the membrane as a helical segment.

The protein localises to the membrane. This is an uncharacterized protein from Saccharomyces cerevisiae (strain ATCC 204508 / S288c) (Baker's yeast).